The sequence spans 383 residues: Probable aspartate/prephenate aminotransferase (383 aa).

Residues G39, W125, and N175 each coordinate L-aspartate. K234 carries the N6-(pyridoxal phosphate)lysine modification. R361 is a binding site for L-aspartate.

Belongs to the class-I pyridoxal-phosphate-dependent aminotransferase family. As to quaternary structure, homodimer. The cofactor is pyridoxal 5'-phosphate.

The protein resides in the cytoplasm. The catalysed reaction is L-aspartate + 2-oxoglutarate = oxaloacetate + L-glutamate. The enzyme catalyses L-arogenate + oxaloacetate = prephenate + L-aspartate. In terms of biological role, catalyzes the reversible conversion of aspartate and 2-oxoglutarate to glutamate and oxaloacetate. Can also transaminate prephenate in the presence of aspartate. The sequence is that of Probable aspartate/prephenate aminotransferase (aspC) from Thermus aquaticus.